The following is a 312-amino-acid chain: Methionyl-tRNA formyltransferase (312 aa).

117-120 (SLLP) contributes to the (6S)-5,6,7,8-tetrahydrofolate binding site.

This sequence belongs to the Fmt family.

The catalysed reaction is L-methionyl-tRNA(fMet) + (6R)-10-formyltetrahydrofolate = N-formyl-L-methionyl-tRNA(fMet) + (6S)-5,6,7,8-tetrahydrofolate + H(+). Functionally, attaches a formyl group to the free amino group of methionyl-tRNA(fMet). The formyl group appears to play a dual role in the initiator identity of N-formylmethionyl-tRNA by promoting its recognition by IF2 and preventing the misappropriation of this tRNA by the elongation apparatus. The sequence is that of Methionyl-tRNA formyltransferase from Bordetella pertussis (strain Tohama I / ATCC BAA-589 / NCTC 13251).